The sequence spans 427 residues: L-glutamine:2-deoxy-scyllo-inosose aminotransferase (427 aa).

A disordered region spans residues 1–20; it reads MPLQSSRLAVDNGTPVRGKP. Lys205 is modified (N6-(pyridoxal phosphate)lysine).

Belongs to the DegT/DnrJ/EryC1 family. L-glutamine:2-deoxy-scyllo-inosose/scyllo-inosose aminotransferase subfamily. Pyridoxal 5'-phosphate is required as a cofactor.

The catalysed reaction is 2-deoxy-L-scyllo-inosose + L-glutamine = 2-deoxy-scyllo-inosamine + 2-oxoglutaramate. The enzyme catalyses 3-amino-2,3-dideoxy-scyllo-inosose + L-glutamine = 2-deoxystreptamine + 2-oxoglutaramate. It functions in the pathway metabolic intermediate biosynthesis; 2-deoxystreptamine biosynthesis; 2-deoxystreptamine from D-glucose 6-phosphate: step 2/4. It participates in antibiotic biosynthesis; kanamycin biosynthesis. Catalyzes the PLP-dependent transamination of 2-deoxy-scyllo-inosose (2-DOI) to form 2-deoxy-scyllo-inosamine (2-DOIA) using L-glutamine as the amino donor. Also catalyzes the transamination of 3-amino-2,3-dideoxy-scyllo-inosose (keto-2-DOIA) into 2-deoxystreptamine (2-DOS). In Streptomyces kanamyceticus, this protein is L-glutamine:2-deoxy-scyllo-inosose aminotransferase (kanB).